The sequence spans 308 residues: Ferredoxin--NADP reductase (308 aa).

FAD is bound by residues E26, Q34, Y39, V77, F106, D266, and T306.

Belongs to the ferredoxin--NADP reductase type 2 family. Homodimer. The cofactor is FAD.

It carries out the reaction 2 reduced [2Fe-2S]-[ferredoxin] + NADP(+) + H(+) = 2 oxidized [2Fe-2S]-[ferredoxin] + NADPH. The protein is Ferredoxin--NADP reductase of Lactobacillus delbrueckii subsp. bulgaricus (strain ATCC 11842 / DSM 20081 / BCRC 10696 / JCM 1002 / NBRC 13953 / NCIMB 11778 / NCTC 12712 / WDCM 00102 / Lb 14).